The sequence spans 547 residues: Beta,beta-carotene 15,15'-dioxygenase (547 aa).

Residues His-172, His-237, His-308, and His-514 each coordinate Fe cation. Residues Gln-528–Asp-540 show a composition bias toward basic and acidic residues. Residues Gln-528–Thr-547 form a disordered region.

The protein belongs to the carotenoid oxygenase family. Requires Fe(2+) as cofactor. As to expression, highly expressed in retinal pigment epithelium. Also expressed in kidney, testis, liver, brain, small intestine and colon.

It localises to the cytoplasm. The protein resides in the cytosol. The catalysed reaction is all-trans-beta-carotene + O2 = 2 all-trans-retinal. The protein operates within cofactor metabolism; retinol metabolism. Functionally, symmetrically cleaves beta-carotene into two molecules of retinal using a dioxygenase mechanism. The sequence is that of Beta,beta-carotene 15,15'-dioxygenase from Homo sapiens (Human).